We begin with the raw amino-acid sequence, 498 residues long: ATP synthase subunit beta, chloroplastic (498 aa).

172 to 179 (GGAGVGKT) contacts ATP.

It belongs to the ATPase alpha/beta chains family. In terms of assembly, F-type ATPases have 2 components, CF(1) - the catalytic core - and CF(0) - the membrane proton channel. CF(1) has five subunits: alpha(3), beta(3), gamma(1), delta(1), epsilon(1). CF(0) has four main subunits: a(1), b(1), b'(1) and c(9-12).

It localises to the plastid. The protein localises to the chloroplast thylakoid membrane. It carries out the reaction ATP + H2O + 4 H(+)(in) = ADP + phosphate + 5 H(+)(out). Its function is as follows. Produces ATP from ADP in the presence of a proton gradient across the membrane. The catalytic sites are hosted primarily by the beta subunits. This is ATP synthase subunit beta, chloroplastic from Eucalyptus globulus subsp. globulus (Tasmanian blue gum).